We begin with the raw amino-acid sequence, 341 residues long: MMPQSLPDTTTPKRRFRWPTGMPQLVALLLVLLVDSLVAPHFWQVVLQDGRLFGSPIDILNRAAPVALLAIGMTLVIATGGIDLSVGAVMAIAGATTAAMTVAGFSLPIVLLSALGTGILAGLWNGILVAILKIQPFVATLILMVAGRGVAQLITAGQIVTFNSPDLSWFGSGSLLFLPTPVIIAVLTLILFWLLTRKTALGMFIEAVGINIRAAKNAGVNTRIIVMLTYVLSGLCAAIAGIIVAADIRGADANNAGLWLELDAILAVVIGGGSLMGGRFNLLLSVVGALIIQGMNTGILLSGFPPEMNQVVKAVVVLCVLIVQSQRFISLIKGVRSRDKT.

Residues 1-25 lie on the Cytoplasmic side of the membrane; sequence MMPQSLPDTTTPKRRFRWPTGMPQL. A helical transmembrane segment spans residues 26–46; the sequence is VALLLVLLVDSLVAPHFWQVV. Residues 47–65 are Periplasmic-facing; the sequence is LQDGRLFGSPIDILNRAAP. Helical transmembrane passes span 66 to 86 and 87 to 107; these read VALL…DLSV and GAVM…GFSL. Proline 108 is a topological domain (periplasmic). The chain crosses the membrane as a helical span at residues 109–129; it reads IVLLSALGTGILAGLWNGILV. Over 130 to 136 the chain is Cytoplasmic; the sequence is AILKIQP. Residues 137–157 form a helical membrane-spanning segment; that stretch reads FVATLILMVAGRGVAQLITAG. Residues 158–174 are Periplasmic-facing; the sequence is QIVTFNSPDLSWFGSGS. Residues 175 to 195 form a helical membrane-spanning segment; it reads LLFLPTPVIIAVLTLILFWLL. Residues 196 to 223 lie on the Cytoplasmic side of the membrane; sequence TRKTALGMFIEAVGINIRAAKNAGVNTR. Residues 224–244 form a helical membrane-spanning segment; it reads IIVMLTYVLSGLCAAIAGIIV. Topologically, residues 245 to 255 are periplasmic; the sequence is AADIRGADANN. The chain crosses the membrane as a helical span at residues 256-276; sequence AGLWLELDAILAVVIGGGSLM. Residues 277 to 281 lie on the Cytoplasmic side of the membrane; it reads GGRFN. 2 helical membrane-spanning segments follow: residues 282-302 and 303-323; these read LLLS…ILLS and GFPP…VLIV. At 324 to 341 the chain is on the cytoplasmic side; the sequence is QSQRFISLIKGVRSRDKT.

Belongs to the binding-protein-dependent transport system permease family. AraH/RbsC subfamily. The complex is composed of two ATP-binding proteins (YtfR), two transmembrane proteins (YtfT and YjfF) and a solute-binding protein (YtfQ).

It is found in the cell inner membrane. In terms of biological role, part of the ABC transporter complex YtfQRT-YjfF involved in galactofuranose transport. Probably responsible for the translocation of the substrate across the membrane. This Escherichia coli (strain K12) protein is Galactofuranose transporter permease protein YtfT (ytfT).